The following is a 338-amino-acid chain: Tetraacyldisaccharide 4'-kinase (338 aa).

51–58 contacts ATP; the sequence is HLGGAGKT.

Belongs to the LpxK family.

It catalyses the reaction a lipid A disaccharide + ATP = a lipid IVA + ADP + H(+). It functions in the pathway glycolipid biosynthesis; lipid IV(A) biosynthesis; lipid IV(A) from (3R)-3-hydroxytetradecanoyl-[acyl-carrier-protein] and UDP-N-acetyl-alpha-D-glucosamine: step 6/6. Transfers the gamma-phosphate of ATP to the 4'-position of a tetraacyldisaccharide 1-phosphate intermediate (termed DS-1-P) to form tetraacyldisaccharide 1,4'-bis-phosphate (lipid IVA). This chain is Tetraacyldisaccharide 4'-kinase, found in Rhodopseudomonas palustris (strain HaA2).